Here is a 229-residue protein sequence, read N- to C-terminus: UPF0758 protein Moth_0536 (229 aa).

The region spanning 107–229 is the MPN domain; it reads VIRNPRDVAG…FTSLKERNLL (123 aa). Residues H178, H180, and D191 each contribute to the Zn(2+) site. The JAMM motif motif lies at 178 to 191; the sequence is HNHPSGDPTPSQED.

This sequence belongs to the UPF0758 family.

This is UPF0758 protein Moth_0536 from Moorella thermoacetica (strain ATCC 39073 / JCM 9320).